Consider the following 327-residue polypeptide: Lipoyl synthase (327 aa).

[4Fe-4S] cluster contacts are provided by cysteine 66, cysteine 71, cysteine 77, cysteine 92, cysteine 96, cysteine 99, and serine 306. One can recognise a Radical SAM core domain in the interval 78 to 295; that stretch reads FSKGTATFMI…EKEAYELGFT (218 aa).

The protein belongs to the radical SAM superfamily. Lipoyl synthase family. Requires [4Fe-4S] cluster as cofactor.

It localises to the cytoplasm. The enzyme catalyses [[Fe-S] cluster scaffold protein carrying a second [4Fe-4S](2+) cluster] + N(6)-octanoyl-L-lysyl-[protein] + 2 oxidized [2Fe-2S]-[ferredoxin] + 2 S-adenosyl-L-methionine + 4 H(+) = [[Fe-S] cluster scaffold protein] + N(6)-[(R)-dihydrolipoyl]-L-lysyl-[protein] + 4 Fe(3+) + 2 hydrogen sulfide + 2 5'-deoxyadenosine + 2 L-methionine + 2 reduced [2Fe-2S]-[ferredoxin]. The protein operates within protein modification; protein lipoylation via endogenous pathway; protein N(6)-(lipoyl)lysine from octanoyl-[acyl-carrier-protein]: step 2/2. Its function is as follows. Catalyzes the radical-mediated insertion of two sulfur atoms into the C-6 and C-8 positions of the octanoyl moiety bound to the lipoyl domains of lipoate-dependent enzymes, thereby converting the octanoylated domains into lipoylated derivatives. The polypeptide is Lipoyl synthase (Neisseria gonorrhoeae (strain ATCC 700825 / FA 1090)).